Here is a 128-residue protein sequence, read N- to C-terminus: NADPH-dependent 7-cyano-7-deazaguanine reductase (128 aa).

The active-site Thioimide intermediate is the cysteine 39. Aspartate 46 functions as the Proton donor in the catalytic mechanism. Substrate contacts are provided by residues 61-63 (IEL) and 80-81 (HE).

Belongs to the GTP cyclohydrolase I family. QueF type 1 subfamily.

It is found in the cytoplasm. The catalysed reaction is 7-aminomethyl-7-carbaguanine + 2 NADP(+) = 7-cyano-7-deazaguanine + 2 NADPH + 3 H(+). It functions in the pathway tRNA modification; tRNA-queuosine biosynthesis. Its function is as follows. Catalyzes the NADPH-dependent reduction of 7-cyano-7-deazaguanine (preQ0) to 7-aminomethyl-7-deazaguanine (preQ1). This is NADPH-dependent 7-cyano-7-deazaguanine reductase from Magnetococcus marinus (strain ATCC BAA-1437 / JCM 17883 / MC-1).